The primary structure comprises 697 residues: MATSCFPPFSASSSSLCSSQFTPLLSCPRNTQICRKKRPVMASMHSENQKESNVCNRRSILFVGFSVLPLLNLRARALEGLSTDSQAQPQKEETEQTIQGSAGNPFVSLLNGLGVVGSGVLGSLYALARNEKAVSDATIESMKNKLKDKEDAFVSMKKQFESELLSEREDRNKLIRREGEERQALVNQLKSAKTTVISLGQELQNEKKLAEDLKFEIKGLQNDLMNTKEDKKKLQEELKEKLDLIQVLEEKITLLTTEIKDKEVSLRSNTSKLAEKESEVNSLSDMYQQSQDQLMNLTSEIKELKDEIQKRERELELKCVSEDNLNVQLNSLLLERDESKKELHAIQKEYSEFKSNSDEKVASDATLGEQEKRLHQLEEQLGTALSEASKNEVLIADLTREKENLRRMVDAELDNVNKLKQEIEVTQESLENSRSEVSDITVQLEQLRDLSSKLEREVSKLQMELEETRASLQRNIDETKHSSELLAAELTTTKELLKKTNEEMHTMSDELVAVSENRDSLQTELVNVYKKREHTRNELKQEKTIVRTLEEELKFLESQITREKELRKSLEDELEKATESLDEINRNVLALAEELELATSRNSSLEDEREVHRQSVSEQKQISQEAQENLEDAHSLVMKLGKERESLEKRAKKLEDEMAAAKGEILRLRSQINSVKAPVEDEEKVVAGEKEKVNVQQ.

The transit peptide at 1–41 (MATSCFPPFSASSSSLCSSQFTPLLSCPRNTQICRKKRPVM) directs the protein to the chloroplast. The transit peptide at 42-79 (ASMHSENQKESNVCNRRSILFVGFSVLPLLNLRARALE) directs the protein to the thylakoid. At 80 to 106 (GLSTDSQAQPQKEETEQTIQGSAGNPF) the chain is on the lumenal, thylakoid side. A disordered region spans residues 81-100 (LSTDSQAQPQKEETEQTIQG). A helical transmembrane segment spans residues 107–127 (VSLLNGLGVVGSGVLGSLYAL). Residues 128–697 (ARNEKAVSDA…GEKEKVNVQQ (570 aa)) are Stromal-facing. A coiled-coil region spans residues 203-671 (LQNEKKLAED…KGEILRLRSQ (469 aa)). Residues 599–629 (TSRNSSLEDEREVHRQSVSEQKQISQEAQEN) are disordered. A compositionally biased stretch (basic and acidic residues) spans 604–615 (SLEDEREVHRQS). Positions 616-627 (VSEQKQISQEAQ) are enriched in polar residues.

Interacts with MAF1. Interacts with PTST2; the interaction is essential for the initiation of starch granules biosynthesis in leaf chloroplasts, for the correct location of the process in the stromal spaces between the thylakoid membranes, and for the association of PTST2 with the thylakoid membranes. In terms of processing, phosphorylated in vitro by human casein kinase II. Predicted to be translocated into the thylakoid by the Tat system.

It is found in the plastid. The protein resides in the chloroplast. It localises to the chloroplast thylakoid membrane. The protein localises to the chloroplast stroma. Its subcellular location is the chloroplast nucleoid. It is found in the nucleus. The protein resides in the nucleus matrix. Required for the initiation of starch granules biosynthesis in leaf chloroplasts. Anchored to the thylakoid membranes with its C-terminus facing into the stroma where it is essential for localizing PTST2 and SS4 to the stromal spaces between the thylakoid membranes in order to begin starch granule formation. Associated with leaf chloroplastic nucleoids in vivo. Binds to various chloroplastic double-stranded DNA fragments without particular sequence specificity in vitro. May function at the interface between nucleoids and thylakoids possibly by anchoring nucleoids to the thylakoid membrane system in mature chloroplasts. Binds nuclear DNA. Interacts with chromatin via matrix attachment regions (MARs). Likely to participate in nuclear architecture by connecting chromatin with the nuclear matrix and potentially with the nuclear envelope. The sequence is that of MAR-binding filament-like protein 1 from Solanum lycopersicum (Tomato).